Reading from the N-terminus, the 863-residue chain is Adenosylcobalamin biosynthesis bifunctional protein CobDQ (863 aa).

The interval 1–373 (MNLPEHGGNL…LKSRKKTPSI (373 aa)) is putative threonine-phosphate decarboxylase. O-phospho-L-threonine-binding positions include 6 to 7 (HG), Asn-30, and Asn-159. Lys-214 is modified (N6-(pyridoxal phosphate)lysine). O-phospho-L-threonine contacts are provided by Arg-323 and Arg-337. A cobyric acid synthase region spans residues 374 to 863 (MFQGTASNVG…NLIYRKLGLG (490 aa)). Residues 622–810 (RLDVVLIDIP…IHGIFDKDEF (189 aa)) form the GATase cobBQ-type domain. The active-site Nucleophile is the Cys-704. The active site involves His-802.

It in the N-terminal section; belongs to the class-II pyridoxal-phosphate-dependent aminotransferase family. The protein in the C-terminal section; belongs to the CobB/CobQ family. CobQ subfamily. It depends on pyridoxal 5'-phosphate as a cofactor.

It carries out the reaction O-phospho-L-threonine + H(+) = (R)-1-aminopropan-2-yl phosphate + CO2. It functions in the pathway cofactor biosynthesis; adenosylcobalamin biosynthesis. In terms of biological role, catalyzes two activities which are involved in the adenosylcobalamin biosynthesis: decarboxylates L-threonine-O-3-phosphate to yield (R)-1-amino-2-propanol O-2-phosphate, the precursor for the linkage between the nucleotide loop and the corrin ring in cobalamin, and catalyzes amidations at positions B, D, E, and G on adenosylcobyrinic A,C-diamide. NH(2) groups are provided by glutamine, and one molecule of ATP is hydrogenolyzed for each amidation. In Leptospira interrogans serogroup Icterohaemorrhagiae serovar Lai (strain 56601), this protein is Adenosylcobalamin biosynthesis bifunctional protein CobDQ (cobDQ).